Consider the following 217-residue polypeptide: Somatotropin (217 aa).

The first 26 residues, 1–26 (MAAGSRTSLLLAFALLCLPWLQEGSA), serve as a signal peptide directing secretion. His44 serves as a coordination point for Zn(2+). Residues Cys79 and Cys191 are joined by a disulfide bond. Ser132 carries the phosphoserine modification. Residue Glu200 coordinates Zn(2+). A disulfide bridge links Cys208 with Cys215.

The protein belongs to the somatotropin/prolactin family.

Its subcellular location is the secreted. Plays an important role in growth control. Its major role in stimulating body growth is to stimulate the liver and other tissues to secrete IGF1. It stimulates both the differentiation and proliferation of myoblasts. It also stimulates amino acid uptake and protein synthesis in muscle and other tissues. The sequence is that of Somatotropin (GH1) from Macaca mulatta (Rhesus macaque).